A 144-amino-acid polypeptide reads, in one-letter code: Cytochrome c-type biogenesis protein CcmE (144 aa).

The Cytoplasmic segment spans residues methionine 1–arginine 7. The chain crosses the membrane as a helical; Signal-anchor for type II membrane protein span at residues alanine 8 to alanine 28. At leucine 29–lysine 144 the chain is on the periplasmic side. Heme is bound by residues histidine 121 and tyrosine 125.

The protein belongs to the CcmE/CycJ family.

The protein resides in the cell inner membrane. In terms of biological role, heme chaperone required for the biogenesis of c-type cytochromes. Transiently binds heme delivered by CcmC and transfers the heme to apo-cytochromes in a process facilitated by CcmF and CcmH. The protein is Cytochrome c-type biogenesis protein CcmE of Polynucleobacter necessarius subsp. necessarius (strain STIR1).